Here is a 306-residue protein sequence, read N- to C-terminus: MIIFSGGTGTPKLLDGLRHIVPEDELTVVVNTAEDVWVSGNLITPDIDTILYLLSGRIDRDKWWGVKDDTFQTHREMKELGHDESMMIGDLDRVTHIMRSDLLRQGLSLSESIHELLSVYGIGVNVLPMSDDSVRTIVETPSGHVHFQDFWVKQHGVPEVLSVEQEGIEEASICSLVLEALESDDEVLIGPSNPITSIGPIISLPGMSRILRKKKVVAVSPIIGNEAVSGPAGKFMTARGFDVSSRGIADCYREFLDVLVLDDRDTTSPEQFQKMGVDVVSTNTLMKSLEISKDLSKKIVSIFANI.

Asp48 contacts 7,8-didemethyl-8-hydroxy-5-deazariboflavin.

It belongs to the CofD family. In terms of assembly, homodimer. Mg(2+) is required as a cofactor.

It catalyses the reaction (2S)-lactyl-2-diphospho-5'-guanosine + 7,8-didemethyl-8-hydroxy-5-deazariboflavin = oxidized coenzyme F420-0 + GMP + H(+). It functions in the pathway cofactor biosynthesis; coenzyme F420 biosynthesis. Functionally, catalyzes the transfer of the 2-phospholactate moiety from (2S)-lactyl-2-diphospho-5'-guanosine to 7,8-didemethyl-8-hydroxy-5-deazariboflavin (FO) with the formation of oxidized coenzyme F420-0 and GMP. This Methanococcoides burtonii (strain DSM 6242 / NBRC 107633 / OCM 468 / ACE-M) protein is 2-phospho-L-lactate transferase.